Reading from the N-terminus, the 199-residue chain is Recombination protein RecR (199 aa).

A C4-type zinc finger spans residues 57–72; the sequence is CSICGNITDKDPCYVC. One can recognise a Toprim domain in the interval 80–176; sequence TIVCVVQDSR…RVTRIAHGLP (97 aa).

It belongs to the RecR family.

Functionally, may play a role in DNA repair. It seems to be involved in an RecBC-independent recombinational process of DNA repair. It may act with RecF and RecO. This Exiguobacterium sibiricum (strain DSM 17290 / CCUG 55495 / CIP 109462 / JCM 13490 / 255-15) protein is Recombination protein RecR.